The primary structure comprises 60 residues: DNA-directed RNA polymerase subunit Rpo6 (60 aa).

This sequence belongs to the archaeal Rpo6/eukaryotic RPB6 RNA polymerase subunit family. Part of the RNA polymerase complex.

The protein resides in the cytoplasm. It carries out the reaction RNA(n) + a ribonucleoside 5'-triphosphate = RNA(n+1) + diphosphate. DNA-dependent RNA polymerase (RNAP) catalyzes the transcription of DNA into RNA using the four ribonucleoside triphosphates as substrates. The protein is DNA-directed RNA polymerase subunit Rpo6 of Methanosarcina acetivorans (strain ATCC 35395 / DSM 2834 / JCM 12185 / C2A).